The primary structure comprises 367 residues: Peptide chain release factor 2 (367 aa).

An N5-methylglutamine modification is found at Q254.

Belongs to the prokaryotic/mitochondrial release factor family. In terms of processing, methylated by PrmC. Methylation increases the termination efficiency of RF2.

The protein localises to the cytoplasm. Peptide chain release factor 2 directs the termination of translation in response to the peptide chain termination codons UGA and UAA. The chain is Peptide chain release factor 2 from Neisseria meningitidis serogroup A / serotype 4A (strain DSM 15465 / Z2491).